The sequence spans 38 residues: Large ribosomal subunit protein bL36 (38 aa).

The protein belongs to the bacterial ribosomal protein bL36 family.

This chain is Large ribosomal subunit protein bL36, found in Lactobacillus acidophilus (strain ATCC 700396 / NCK56 / N2 / NCFM).